The following is a 321-amino-acid chain: Gap junction delta-2 protein (321 aa).

Topologically, residues 1–19 (MGEWTILERLLEAAVQQHS) are cytoplasmic. The chain crosses the membrane as a helical span at residues 20 to 42 (TMIGRILLTVVVIFRILIVAIVG). At 43-75 (ETVYDDEQTMFVCNTLQPGCNQACYDRAFPISH) the chain is on the extracellular side. Residues 76–98 (IRYWVFQIIMVCTPSLCFITYSV) form a helical membrane-spanning segment. Over 99-197 (HQSAKQRERR…KLRRQEGISR (99 aa)) the chain is Cytoplasmic. The interval 120 to 141 (PAESIGGPGGTGGGGSGGSKRE) is disordered. Over residues 125–137 (GGPGGTGGGGSGG) the composition is skewed to gly residues. A helical transmembrane segment spans residues 198–220 (FYIIQVVFRNALEIGFLVGQYFL). Residues 221–252 (YGFSVPGLYECNRYPCIKEVECYVSRPTEKTV) lie on the Extracellular side of the membrane. The chain crosses the membrane as a helical span at residues 253-275 (FLVFMFAVSGICVVLNLAELNHL). Residues 276–321 (GWRKIKLAVRGAQAKRKSVYEIRNKDLPRVSVPNFGRTQSSDSAYV) are Cytoplasmic-facing.

Belongs to the connexin family. Delta-type subfamily. As to quaternary structure, a connexon is composed of a hexamer of connexins. As to expression, highly expressed in neurons.

The protein localises to the cell membrane. It localises to the cell junction. The protein resides in the gap junction. One gap junction consists of a cluster of closely packed pairs of transmembrane channels, the connexons, through which materials of low MW diffuse from one cell to a neighboring cell. The chain is Gap junction delta-2 protein (Gjd2) from Mus musculus (Mouse).